The following is a 252-amino-acid chain: Small ribosomal subunit protein uS2 (252 aa).

At Ser2 the chain carries N-acetylserine. Positions 213 to 222 (QVAEETAGAA) are enriched in low complexity. The tract at residues 213–252 (QVAEETAGAATEEEEAKEEVTEEQTEATEWAEETTEAVAW) is disordered. A compositionally biased stretch (acidic residues) spans 223–252 (TEEEEAKEEVTEEQTEATEWAEETTEAVAW).

Belongs to the universal ribosomal protein uS2 family. In terms of assembly, component of the small ribosomal subunit. Mature ribosomes consist of a small (40S) and a large (60S) subunit. The 40S subunit contains about 33 different proteins and 1 molecule of RNA (18S). The 60S subunit contains about 49 different proteins and 3 molecules of RNA (25S, 5.8S and 5S). Interacts with RPS21.

The protein resides in the cytoplasm. Functionally, required for the assembly and/or stability of the 40S ribosomal subunit. Required for the processing of the 20S rRNA-precursor to mature 18S rRNA in a late step of the maturation of 40S ribosomal subunits. This Zygosaccharomyces rouxii (strain ATCC 2623 / CBS 732 / NBRC 1130 / NCYC 568 / NRRL Y-229) protein is Small ribosomal subunit protein uS2.